The sequence spans 504 residues: Pentatricopeptide repeat-containing protein At1g05600 (504 aa).

12 PPR repeats span residues Asn45–Cys79, Lys80–Asn114, Trp115–Gly145, Arg151–Pro185, Asp186–Arg216, Asp225–Ala259, Pro260–Pro296, Cys297–Pro331, Thr332–Pro367, Thr368–Gln398, Asn404–Pro438, and Gly439–Pro473.

This sequence belongs to the PPR family. P subfamily.

The polypeptide is Pentatricopeptide repeat-containing protein At1g05600 (Arabidopsis thaliana (Mouse-ear cress)).